A 549-amino-acid polypeptide reads, in one-letter code: MKRVLTALAATLPFAANAADALTGAVERQPTNWQAIIMFLIFVLLTLYITYWASKRVRSRNDYYTAGGNITGFQNGLAIAGDFMSAASFLGISALVYTSGYDGLIYSLGFLVGWPIILFLIAERLRNLGRYTFADVASYRLKQGPIRTLSACGSLVVVALYLIAQMVGAGKLIQLLFGLNYHIAVVLVGVLMVMYVLFGGMLATTWVQIIKAVLLLFGASFMAFMVMKHVGFSFNNLFTQAMAVHPKGEAIMSPGGLVKDPISALSLGLGLMFGTAGLPHILMRFFTVSDAREARKSVFYATGFMGYFYILTFIIGFGAIMLVGANPAFKDAAGTLIGGNNMAAVHLADAVGGNLFLGFISAVAFATILAVVAGLTLAGASAVSHDLYANVWRKGATERQELKVSKITVLILGVVAILLGILFENQNIAFMVGLAFSIAASCNFPIILLSMYWSKLTTRGAMIGGWLGLLTAVILMVLGPTIWVQILGHEKAIFPYEYPALFSIAVAFIGIWFFSATDNSAEGKLEREKFRAQFIRSQTGLGIDQGRAH.

13 consecutive transmembrane segments (helical) span residues 33–53, 76–96, 103–123, 149–169, 183–203, 206–226, 262–282, 303–323, 355–375, 404–424, 428–448, 463–483, and 493–513; these read WQAI…TYWA, GLAI…SALV, GLIY…LIAE, LSAC…MVGA, IAVV…GMLA, WVQI…AFMV, ISAL…PHIL, GFMG…IMLV, LFLG…VAGL, VSKI…ILFE, IAFM…PIIL, IGGW…PTIW, and IFPY…GIWF.

This sequence belongs to the sodium:solute symporter (SSF) (TC 2.A.21) family.

The protein localises to the cell inner membrane. Its function is as follows. Transports acetate. The sequence is that of Cation/acetate symporter ActP from Enterobacter sp. (strain 638).